A 721-amino-acid chain; its full sequence is Catalase-peroxidase 1 (721 aa).

The segment at residues 98-223 (WHAAGSYRVA…LAAVQMGLIY (126 aa)) is a cross-link (tryptophyl-tyrosyl-methioninium (Trp-Tyr) (with M-249)). His-99 serves as the catalytic Proton acceptor. Positions 223–249 (YVNPEGVNGQPDPLRTAQDVRVTFGRM) form a cross-link, tryptophyl-tyrosyl-methioninium (Tyr-Met) (with W-98). His-264 lines the heme b pocket.

It belongs to the peroxidase family. Peroxidase/catalase subfamily. Homodimer or homotetramer. Requires heme b as cofactor. In terms of processing, formation of the three residue Trp-Tyr-Met cross-link is important for the catalase, but not the peroxidase activity of the enzyme.

The catalysed reaction is H2O2 + AH2 = A + 2 H2O. It catalyses the reaction 2 H2O2 = O2 + 2 H2O. Bifunctional enzyme with both catalase and broad-spectrum peroxidase activity. This is Catalase-peroxidase 1 from Legionella pneumophila (strain Corby).